Reading from the N-terminus, the 115-residue chain is Iron-sulfur cluster insertion protein ErpA (115 aa).

Cys43, Cys107, and Cys109 together coordinate iron-sulfur cluster.

It belongs to the HesB/IscA family. In terms of assembly, homodimer. Iron-sulfur cluster serves as cofactor.

Required for insertion of 4Fe-4S clusters for at least IspG. This Buchnera aphidicola subsp. Baizongia pistaciae (strain Bp) protein is Iron-sulfur cluster insertion protein ErpA.